A 296-amino-acid chain; its full sequence is tRNA uridine(34) hydroxylase (296 aa).

Residues 132 to 226 (AGRPVVMLDT…YFEEVGGAHY (95 aa)) enclose the Rhodanese domain. Cysteine 186 functions as the Cysteine persulfide intermediate in the catalytic mechanism.

This sequence belongs to the TrhO family.

The enzyme catalyses uridine(34) in tRNA + AH2 + O2 = 5-hydroxyuridine(34) in tRNA + A + H2O. Catalyzes oxygen-dependent 5-hydroxyuridine (ho5U) modification at position 34 in tRNAs. This is tRNA uridine(34) hydroxylase from Burkholderia thailandensis (strain ATCC 700388 / DSM 13276 / CCUG 48851 / CIP 106301 / E264).